A 319-amino-acid polypeptide reads, in one-letter code: Mercury resistance probable Hg transport protein (319 aa).

Hg(2+) contacts are provided by Cys298, Cys299, Cys318, and Cys319.

The protein is Mercury resistance probable Hg transport protein of Streptomyces lividans.